Consider the following 220-residue polypeptide: Deoxyribose-phosphate aldolase (220 aa).

The Proton donor/acceptor role is filled by aspartate 89. The active-site Schiff-base intermediate with acetaldehyde is lysine 151. Lysine 180 acts as the Proton donor/acceptor in catalysis.

It belongs to the DeoC/FbaB aldolase family. DeoC type 1 subfamily.

Its subcellular location is the cytoplasm. It catalyses the reaction 2-deoxy-D-ribose 5-phosphate = D-glyceraldehyde 3-phosphate + acetaldehyde. It functions in the pathway carbohydrate degradation; 2-deoxy-D-ribose 1-phosphate degradation; D-glyceraldehyde 3-phosphate and acetaldehyde from 2-deoxy-alpha-D-ribose 1-phosphate: step 2/2. Functionally, catalyzes a reversible aldol reaction between acetaldehyde and D-glyceraldehyde 3-phosphate to generate 2-deoxy-D-ribose 5-phosphate. This is Deoxyribose-phosphate aldolase from Deinococcus radiodurans (strain ATCC 13939 / DSM 20539 / JCM 16871 / CCUG 27074 / LMG 4051 / NBRC 15346 / NCIMB 9279 / VKM B-1422 / R1).